Consider the following 215-residue polypeptide: Pyridoxine/pyridoxamine 5'-phosphate oxidase (215 aa).

Residues 9 to 12 (RREY) and K69 each bind substrate. FMN is bound by residues 64-69 (RILLLK), 79-80 (FT), K86, and Q108. Positions 126, 130, and 134 each coordinate substrate. FMN-binding positions include 143 to 144 (QS) and W188. Position 194–196 (194–196 (RLH)) interacts with substrate. R198 is an FMN binding site.

The protein belongs to the pyridoxamine 5'-phosphate oxidase family. In terms of assembly, homodimer. Requires FMN as cofactor.

It catalyses the reaction pyridoxamine 5'-phosphate + O2 + H2O = pyridoxal 5'-phosphate + H2O2 + NH4(+). The enzyme catalyses pyridoxine 5'-phosphate + O2 = pyridoxal 5'-phosphate + H2O2. It functions in the pathway cofactor metabolism; pyridoxal 5'-phosphate salvage; pyridoxal 5'-phosphate from pyridoxamine 5'-phosphate: step 1/1. The protein operates within cofactor metabolism; pyridoxal 5'-phosphate salvage; pyridoxal 5'-phosphate from pyridoxine 5'-phosphate: step 1/1. Catalyzes the oxidation of either pyridoxine 5'-phosphate (PNP) or pyridoxamine 5'-phosphate (PMP) into pyridoxal 5'-phosphate (PLP). The protein is Pyridoxine/pyridoxamine 5'-phosphate oxidase of Pseudomonas paraeruginosa (strain DSM 24068 / PA7) (Pseudomonas aeruginosa (strain PA7)).